A 272-amino-acid polypeptide reads, in one-letter code: Imidazole glycerol phosphate synthase subunit HisF (272 aa).

Active-site residues include Asp11 and Asp130.

This sequence belongs to the HisA/HisF family. As to quaternary structure, heterodimer of HisH and HisF.

It localises to the cytoplasm. The catalysed reaction is 5-[(5-phospho-1-deoxy-D-ribulos-1-ylimino)methylamino]-1-(5-phospho-beta-D-ribosyl)imidazole-4-carboxamide + L-glutamine = D-erythro-1-(imidazol-4-yl)glycerol 3-phosphate + 5-amino-1-(5-phospho-beta-D-ribosyl)imidazole-4-carboxamide + L-glutamate + H(+). It participates in amino-acid biosynthesis; L-histidine biosynthesis; L-histidine from 5-phospho-alpha-D-ribose 1-diphosphate: step 5/9. Its function is as follows. IGPS catalyzes the conversion of PRFAR and glutamine to IGP, AICAR and glutamate. The HisF subunit catalyzes the cyclization activity that produces IGP and AICAR from PRFAR using the ammonia provided by the HisH subunit. This Methanococcus maripaludis (strain C5 / ATCC BAA-1333) protein is Imidazole glycerol phosphate synthase subunit HisF.